Reading from the N-terminus, the 192-residue chain is Vascular endothelial growth factor A (192 aa).

Positions 1 to 26 are cleaved as a signal peptide; sequence MNFLLTWIHWGLAALLYFHNAKVLQA. 3 disulfides stabilise this stretch: Cys-52-Cys-94, Cys-83-Cys-128, and Cys-87-Cys-130. Residue Asn-101 is glycosylated (N-linked (GlcNAc...) asparagine).

This sequence belongs to the PDGF/VEGF growth factor family. As to quaternary structure, homodimer; disulfide-linked. Also found as heterodimer with PGF. Interacts with FLT1/VEGFR1 and KDR/VEGFR2 receptors, heparan sulfate and heparin. As to expression, expressed by the venom gland, and probably other tissues.

It is found in the secreted. Its function is as follows. Growth factor active in angiogenesis, vasculogenesis and endothelial cell growth. Induces endothelial cell proliferation, promotes cell migration, inhibits apoptosis and induces permeabilization of blood vessels. The protein is Vascular endothelial growth factor A of Agkistrodon piscivorus piscivorus (Eastern cottonmouth).